A 430-amino-acid polypeptide reads, in one-letter code: Transcription factor iws-1 (430 aa).

Residues 1–14 (MSDAASPAGSPAAE) are compositionally biased toward low complexity. The interval 1 to 153 (MSDAASPAGS…EENLTPDERR (153 aa)) is disordered. Positions 15–33 (PTEHRDEDQVNETHQDDGS) are enriched in basic and acidic residues. Residues 52-63 (VLSEIDENEFGD) are compositionally biased toward acidic residues. The segment covering 95–104 (KEGRRPKKRS) has biased composition (basic residues). Residues 124-137 (VRAEGERRARKEVE) show a composition bias toward basic and acidic residues. The region spanning 244-321 (QSVRYFLEPL…GEWSRLILKR (78 aa)) is the TFIIS N-terminal domain. The disordered stretch occupies residues 402-430 (GQAPTDHRPIGHSGHEAFRRMTQKGKGKR). A compositionally biased stretch (basic and acidic residues) spans 406–420 (TDHRPIGHSGHEAFR).

Belongs to the IWS1 family.

It localises to the nucleus. In terms of biological role, transcription factor involved in RNA polymerase II transcription regulation. May function in both SPT15/TBP post-recruitment and recruitment steps of transcription. The protein is Transcription factor iws-1 (iws-1) of Neurospora crassa (strain ATCC 24698 / 74-OR23-1A / CBS 708.71 / DSM 1257 / FGSC 987).